The chain runs to 845 residues: MGSWALLWPPLLFTGLLVRPPGTMAQAQYCSVNKDIFEVEENTNVTEPLVDIHVPEGQEVTLGALSTPFAFRIQGNQLFLNVTPDYEEKSLLEAQLLCQSGGTLVTQLRVFVSVLDVNDNAPEFPFKTKEIRVEEDTKVNSTVIPETQLQAEDRDKDDILFYTLQEMTAGASDYFSLVSVNRPALRLDRPLDFYERPNMTFWLLVRDTPGENVEPSHTATATLVLNVVPADLRPPWFLPCTFSDGYVCIQAQYHGAVPTGHILPSPLVLRPGPIYAEDGDRGINQPIIYSIFRGNVNGTFIIHPDSGNLTVARSVPSPMTFLLLVKGQQADLARYSVTQVTVEAVAAAGSPPRFPQRLYRGTVARGAGAGVVVKDAAAPSQPLRIQAQDPEFSDLNSAITYRITNHSHFRMEGEVVLTTTTLAQAGAFYAEVEAHNTVTSGTATTVIEIQVSEQEPPSTDVPPSPEAGGTTGPWTSTTSEVPRPPEPSQGPSTTSSGGGTGPHPPSGTTLRPPTSSTPGGPPGAENSTSHQPATPGGDTAQTPKPGTSQPMPPGVGTSTSHQPATPSGGTAQTPEPGTSQPMPPSMGTSTSHQPATPGGGTAQTPEAGTSQPMPPGMGTSTSHQPTTPGGGTAQTPEPGTSQPMPLSKSTPSSGGGPSEDKRFSVVDMAALGGVLGALLLLALLGLAVLVHKHYGPRLKCCCGKAPEPQPQGFDNQAFLPDHKANWAPVPSPTHDPKPAEAPMPAEPAPPGPASPGGAPEPPAAARAGGSPTAVRSILTKERRPEGGYKAVWFGEDIGTEADVVVLNAPTLDVDGASDSGSGDEGEGAGRGGGPYDAPGGDDSYI.

An N-terminal signal peptide occupies residues 1–25 (MGSWALLWPPLLFTGLLVRPPGTMA). At 26-669 (QAQYCSVNKD…DKRFSVVDMA (644 aa)) the chain is on the extracellular side. N-linked (GlcNAc...) asparagine glycosylation is found at asparagine 44, asparagine 81, asparagine 140, asparagine 198, asparagine 297, asparagine 308, and asparagine 405. Cadherin domains follow at residues 71–124 (FRIQ…APEF), 125–237 (PFKT…PPWF), 249–354 (IQAQ…PPRF), and 355–459 (PQRL…PPST). Residues 452–661 (SEQEPPSTDV…SSGGGPSEDK (210 aa)) form a disordered region. The span at 506–518 (SGTTLRPPTSSTP) shows a compositional bias: low complexity. N-linked (GlcNAc...) asparagine glycosylation occurs at asparagine 526. Polar residues-rich tracts occupy residues 539–549 (TAQTPKPGTSQ), 556–594 (GTST…SHQP), and 602–611 (AQTPEAGTSQ). A run of 3 repeats spans residues 540–570 (AQTP…SGGT), 571–601 (AQTP…GGGT), and 602–631 (AQTP…PGGG). The interval 540–645 (AQTPKPGTSQ…PEPGTSQPMP (106 aa)) is 4 X 31 AA approximate tandem repeats. Residues 632–645 (TAQTPEPGTSQPMP) form a 4; truncated repeat. A compositionally biased stretch (low complexity) spans 633-652 (AQTPEPGTSQPMPLSKSTPS). A helical membrane pass occupies residues 670 to 690 (ALGGVLGALLLLALLGLAVLV). Topologically, residues 691 to 845 (HKHYGPRLKC…DAPGGDDSYI (155 aa)) are cytoplasmic. The segment at 691–845 (HKHYGPRLKC…DAPGGDDSYI (155 aa)) is mediates interaction with USH1C and MYO7B and is required for proper localization to microvilli tips and function in microvilli organization. The interval 724-789 (ANWAPVPSPT…KERRPEGGYK (66 aa)) is disordered. Pro residues predominate over residues 729–762 (VPSPTHDPKPAEAPMPAEPAPPGPASPGGAPEPP). Residue serine 770 is modified to Phosphoserine. A Phosphothreonine modification is found at threonine 810. The disordered stretch occupies residues 811-845 (LDVDGASDSGSGDEGEGAGRGGGPYDAPGGDDSYI). A phosphoserine mark is found at serine 817, serine 819, and serine 821. A compositionally biased stretch (low complexity) spans 835–845 (YDAPGGDDSYI).

As to quaternary structure, part of the IMAC/intermicrovillar adhesion complex/intermicrovillar tip-link complex composed of ANKS4B, MYO7B, USH1C, CDHR2 and CDHR5. Interacts (via cytoplasmic domain) with USH1C and MYO7B; required for proper localization of CDHR5 to microvilli tips and its function in brush border differentiation. Post-translationally, N- and O-glycosylated. As to expression, highest expression in kidney, liver, colon and small intestine. In kidney, expressed apically along brush border of proximal convoluted tubule but not in cortical collecting ducts. Isoform 1 is expressed primarily in adult small intestine and colon. Isoform 2 is highly expressed in fetal liver. Expressed in duodenum with higher expression in enterocytes along the villus axis and lower expression in crypts (at protein level).

It is found in the apical cell membrane. The protein localises to the cell projection. The protein resides in the microvillus membrane. In terms of biological role, intermicrovillar adhesion molecule that forms, via its extracellular domain, calcium-dependent heterophilic complexes with CDHR2 on adjacent microvilli. Thereby, controls the packing of microvilli at the apical membrane of epithelial cells. Through its cytoplasmic domain, interacts with microvillus cytoplasmic proteins to form the intermicrovillar adhesion complex/IMAC. This complex plays a central role in microvilli and epithelial brush border differentiation. The protein is Cadherin-related family member 5 of Homo sapiens (Human).